We begin with the raw amino-acid sequence, 1375 residues long: DNA-directed RNA polymerase subunit beta' (1375 aa).

The interval 1 to 158 (MAKNEVLSLP…RVNKIIQPIR (158 aa)) is unknown. Residues 159-1353 (KTYGSKAFTH…GGLIPAGTGI (1195 aa)) form a DNA-directed RNA polymerase subunit beta' region. Zn(2+) contacts are provided by cysteine 219, cysteine 221, cysteine 233, and cysteine 236. 3 residues coordinate Mg(2+): aspartate 607, aspartate 609, and aspartate 611.

This sequence belongs to the RNA polymerase beta' chain family. The RNAP catalytic core consists of 2 alpha, 1 beta, 1 beta' and 1 omega subunit. When a sigma factor is associated with the core the holoenzyme is formed, which can initiate transcription. It depends on Mg(2+) as a cofactor. Requires Zn(2+) as cofactor.

The catalysed reaction is RNA(n) + a ribonucleoside 5'-triphosphate = RNA(n+1) + diphosphate. Its function is as follows. DNA-dependent RNA polymerase catalyzes the transcription of DNA into RNA using the four ribonucleoside triphosphates as substrates. In Acholeplasma laidlawii (strain PG-8A), this protein is DNA-directed RNA polymerase subunit beta'.